Consider the following 441-residue polypeptide: Zinc finger and BTB domain-containing protein 8A (441 aa).

The 69-residue stretch at 24 to 92 (CDCSILVEGK…VYSGKLSLTG (69 aa)) folds into the BTB domain. The disordered stretch occupies residues 135-248 (LSDKDTGSNG…HVSQSEEQVQ (114 aa)). Phosphoserine occurs at positions 161 and 167. Glycyl lysine isopeptide (Lys-Gly) (interchain with G-Cter in SUMO2) cross-links involve residues K178, K182, and K199. Composition is skewed to basic and acidic residues over residues 198–208 (AKHEQRKDPIK) and 227–242 (GKGD…HVSQ). 2 C2H2-type zinc fingers span residues 282 to 304 (FKCP…LRCH) and 310 to 333 (YPCQ…RTIH). A Glycyl lysine isopeptide (Lys-Gly) (interchain with G-Cter in SUMO2) cross-link involves residue K437.

It localises to the nucleus. In terms of biological role, may be involved in transcriptional regulation. In Rattus norvegicus (Rat), this protein is Zinc finger and BTB domain-containing protein 8A (Zbtb8a).